The chain runs to 64 residues: uncharacterized protein (64 aa).

This is an uncharacterized protein from African swine fever virus (strain Badajoz 1971 Vero-adapted) (Ba71V).